The chain runs to 206 residues: Dual specificity phosphatase 29 (206 aa).

The Tyrosine-protein phosphatase domain maps to 47-194; sequence HVNQVWPSVY…LRALDITLQE (148 aa). 138–145 provides a ligand contact to substrate; the sequence is HCVMGRSR. The active-site Phosphocysteine intermediate is C139.

This sequence belongs to the protein-tyrosine phosphatase family. Non-receptor class dual specificity subfamily.

It localises to the cytoplasm. The protein resides in the nucleus. The enzyme catalyses O-phospho-L-tyrosyl-[protein] + H2O = L-tyrosyl-[protein] + phosphate. It catalyses the reaction O-phospho-L-seryl-[protein] + H2O = L-seryl-[protein] + phosphate. It carries out the reaction O-phospho-L-threonyl-[protein] + H2O = L-threonyl-[protein] + phosphate. In terms of biological role, dual specificity phosphatase able to dephosphorylate phosphotyrosine, phosphoserine and phosphothreonine residues within the same substrate, with a preference for phosphotyrosine as a substrate. Involved in the modulation of AMPK and MAPK1/2 signaling pathways. This Gasterosteus aculeatus (Three-spined stickleback) protein is Dual specificity phosphatase 29 (dusp29).